Here is a 141-residue protein sequence, read N- to C-terminus: Vesicle-associated membrane protein 4 (141 aa).

The tract at residues 1–51 (MPPKFKRHLNDDDVTGSVKSERRNLLEDDSDEEEDFFLRGPSGPRFGPRND) is disordered. Over 1–115 (MPPKFKRHLN…RRQMWWRGCK (115 aa)) the chain is Cytoplasmic. 2 positions are modified to phosphoserine: Ser-17 and Ser-30. One can recognise a v-SNARE coiled-coil homology domain in the interval 52-112 (KIKHVQNQVD…KQLRRQMWWR (61 aa)). Residues 116-136 (IKAIMALVAVILLLVIIILIV) form a helical; Anchor for type IV membrane protein membrane-spanning segment. At 137–141 (VKYRT) the chain is on the vesicular side.

It belongs to the synaptobrevin family. As to quaternary structure, identified in a complex containing STX6, STX12, VAMP4 and VTI1A. Interacts with BAIAP3; this interaction is increased in the presence of calcium.

It localises to the golgi apparatus. Its subcellular location is the trans-Golgi network membrane. Its function is as follows. Involved in the pathway that functions to remove an inhibitor (probably synaptotagmin-4) of calcium-triggered exocytosis during the maturation of secretory granules. May be a marker for this sorting pathway that is critical for remodeling the secretory response of granule. The polypeptide is Vesicle-associated membrane protein 4 (VAMP4) (Bos taurus (Bovine)).